Reading from the N-terminus, the 339-residue chain is DNA-directed RNA polymerase subunit alpha (339 aa).

The segment at Met-1–Glu-235 is alpha N-terminal domain (alpha-NTD). The tract at residues Phe-251–Tyr-339 is alpha C-terminal domain (alpha-CTD).

Belongs to the RNA polymerase alpha chain family. Homodimer. The RNAP catalytic core consists of 2 alpha, 1 beta, 1 beta' and 1 omega subunit. When a sigma factor is associated with the core the holoenzyme is formed, which can initiate transcription.

It carries out the reaction RNA(n) + a ribonucleoside 5'-triphosphate = RNA(n+1) + diphosphate. Functionally, DNA-dependent RNA polymerase catalyzes the transcription of DNA into RNA using the four ribonucleoside triphosphates as substrates. This is DNA-directed RNA polymerase subunit alpha from Rhodopseudomonas palustris (strain HaA2).